We begin with the raw amino-acid sequence, 336 residues long: Holliday junction branch migration complex subunit RuvB (336 aa).

Positions 1-182 are large ATPase domain (RuvB-L); that stretch reads MKERIVNLET…FGMSFRMQFY (182 aa). ATP-binding positions include Leu21, Arg22, Gly63, Lys66, Thr67, Ser68, 129–131, Arg172, Tyr182, and Arg219; that span reads EDF. Thr67 is a Mg(2+) binding site. Residues 183 to 253 form a small ATPAse domain (RuvB-S) region; it reads SPSELSLIIK…ITLHALNELG (71 aa). The interval 256-336 is head domain (RuvB-H); that stretch reads ELGFDEADLA…IPTLNPQTLF (81 aa). 2 residues coordinate DNA: Arg310 and Arg315.

The protein belongs to the RuvB family. In terms of assembly, homohexamer. Forms an RuvA(8)-RuvB(12)-Holliday junction (HJ) complex. HJ DNA is sandwiched between 2 RuvA tetramers; dsDNA enters through RuvA and exits via RuvB. An RuvB hexamer assembles on each DNA strand where it exits the tetramer. Each RuvB hexamer is contacted by two RuvA subunits (via domain III) on 2 adjacent RuvB subunits; this complex drives branch migration. In the full resolvosome a probable DNA-RuvA(4)-RuvB(12)-RuvC(2) complex forms which resolves the HJ.

It is found in the cytoplasm. The catalysed reaction is ATP + H2O = ADP + phosphate + H(+). Its function is as follows. The RuvA-RuvB-RuvC complex processes Holliday junction (HJ) DNA during genetic recombination and DNA repair, while the RuvA-RuvB complex plays an important role in the rescue of blocked DNA replication forks via replication fork reversal (RFR). RuvA specifically binds to HJ cruciform DNA, conferring on it an open structure. The RuvB hexamer acts as an ATP-dependent pump, pulling dsDNA into and through the RuvAB complex. RuvB forms 2 homohexamers on either side of HJ DNA bound by 1 or 2 RuvA tetramers; 4 subunits per hexamer contact DNA at a time. Coordinated motions by a converter formed by DNA-disengaged RuvB subunits stimulates ATP hydrolysis and nucleotide exchange. Immobilization of the converter enables RuvB to convert the ATP-contained energy into a lever motion, pulling 2 nucleotides of DNA out of the RuvA tetramer per ATP hydrolyzed, thus driving DNA branch migration. The RuvB motors rotate together with the DNA substrate, which together with the progressing nucleotide cycle form the mechanistic basis for DNA recombination by continuous HJ branch migration. Branch migration allows RuvC to scan DNA until it finds its consensus sequence, where it cleaves and resolves cruciform DNA. This is Holliday junction branch migration complex subunit RuvB from Helicobacter pylori (strain P12).